The following is a 655-amino-acid chain: Import motor subunit, mitochondrial (655 aa).

A mitochondrion-targeting transit peptide spans Met1–Leu23. Position 330 is a phosphothreonine (Thr330). The tract at residues Glu629 to Gln655 is disordered. The segment covering Asn637–Asn647 has biased composition (low complexity).

Belongs to the heat shock protein 70 family. In terms of assembly, component of the PAM complex, at least composed of SSC1 (mtHsp70), MGE1, TIM44, PAM16/TIM16, PAM17 and PAM18/TIM14. In the complex, SSC1 interacts directly with PAM18 and TIM44. Interacts with NAP1. Component of endonuclease SceI (endo.SceI), which is a heterodimer of ENS2 and SSC1.

The protein resides in the mitochondrion matrix. The catalysed reaction is ATP + H2O = ADP + phosphate + H(+). Functionally, essential component of the PAM complex, a complex required for the translocation of transit peptide-containing proteins from the inner membrane into the mitochondrial matrix in an ATP-dependent manner. Constitutes the ATP-driven core of the motor and binds the precursor preprotein. Required for the import of the processed frataxin homolog YFH1 into the mitochondrion. Its function is as follows. Acts as a non-catalytic component of endonuclease SceI (endo.SceI), which cleaves specifically at multiple sites on mitochondrial DNA and produces double-stranded breaks. SSC1 confers broader sequence specificity, greater stability, and higher activity on the catalytic subunit. In Saccharomyces cerevisiae (Baker's yeast), this protein is Import motor subunit, mitochondrial.